Here is a 169-residue protein sequence, read N- to C-terminus: Probable chorismate pyruvate-lyase (169 aa).

R71, I110, and E150 together coordinate substrate.

It belongs to the UbiC family.

It localises to the cytoplasm. It catalyses the reaction chorismate = 4-hydroxybenzoate + pyruvate. The protein operates within cofactor biosynthesis; ubiquinone biosynthesis. Removes the pyruvyl group from chorismate, with concomitant aromatization of the ring, to provide 4-hydroxybenzoate (4HB) for the ubiquinone pathway. This is Probable chorismate pyruvate-lyase from Acinetobacter baumannii (strain ATCC 17978 / DSM 105126 / CIP 53.77 / LMG 1025 / NCDC KC755 / 5377).